Consider the following 391-residue polypeptide: Elongation factor Tu (391 aa).

The tr-type G domain maps to 10–201 (KPHVNIGTIG…EVDNYIPTPE (192 aa)). Residues 19-26 (GHVDHGKT) are G1. Position 19-26 (19-26 (GHVDHGKT)) interacts with GTP. A Mg(2+)-binding site is contributed by T26. The G2 stretch occupies residues 55–59 (GITIS). A G3 region spans residues 76–79 (DCPG). GTP is bound by residues 76–80 (DCPGH) and 131–134 (NKVD). Residues 131–134 (NKVD) are G4. The segment at 169 to 171 (SAL) is G5.

The protein belongs to the TRAFAC class translation factor GTPase superfamily. Classic translation factor GTPase family. EF-Tu/EF-1A subfamily. Monomer.

It is found in the cytoplasm. The catalysed reaction is GTP + H2O = GDP + phosphate + H(+). In terms of biological role, GTP hydrolase that promotes the GTP-dependent binding of aminoacyl-tRNA to the A-site of ribosomes during protein biosynthesis. The protein is Elongation factor Tu of Bartonella henselae (strain ATCC 49882 / DSM 28221 / CCUG 30454 / Houston 1) (Rochalimaea henselae).